A 359-amino-acid chain; its full sequence is 4-hydroxy-2-oxovalerate aldolase 1 (359 aa).

The region spanning 23–275 (VRVTDTSLRD…KTGIDFFDIA (253 aa)) is the Pyruvate carboxyltransferase domain. 31–32 (RD) provides a ligand contact to substrate. Asp-32 contacts Mn(2+). Catalysis depends on His-35, which acts as the Proton acceptor. Ser-185 and His-214 together coordinate substrate. Mn(2+) contacts are provided by His-214 and His-216. Residue Tyr-305 coordinates substrate.

The protein belongs to the 4-hydroxy-2-oxovalerate aldolase family.

The enzyme catalyses (S)-4-hydroxy-2-oxopentanoate = acetaldehyde + pyruvate. The sequence is that of 4-hydroxy-2-oxovalerate aldolase 1 from Mycobacteroides abscessus (strain ATCC 19977 / DSM 44196 / CCUG 20993 / CIP 104536 / JCM 13569 / NCTC 13031 / TMC 1543 / L948) (Mycobacterium abscessus).